We begin with the raw amino-acid sequence, 409 residues long: MASLADGGKRRVSYFYEPMIGDYYYGVNQPTKPQRIRVTHNLILSYNLHRHMEINHPDLADASDFEKFHSLEYINFLKSVTPETVTDPHPSVSENLKRFNVDVDWDGPVFHNLFDYCRAYAGGSISAAAKLNRQEADIAINWAGGMHHVKKDKASGFGYVNDVVLAILELLKSFKRVLYIEIGFPHGDEVEEAFKDTDRVMTVSFHKVGDTGDISDYGEGKGQYYSLNAPLKDGLDDFSLRGLFIPVIHRAMEIYEPEVIVLQCGADSLAGDPFGTFNLSIKGHGDCLQYVRSFNVPLMILGGGGYTLPNVARCWCYETAIAVGEQLDNDLPGNDYMKYFRPDYKLHILPTNRQNLNTRLDIITMRETLLAQLSLVMHAPSVPFQDTPSSSQATEAAEVDMEKRNDPRI.

The histone deacetylase stretch occupies residues 11–324; sequence RVSYFYEPMI…WCYETAIAVG (314 aa). Residue His-148 is the Proton donor/acceptor of the active site. Asp-267 is a Zn(2+) binding site. Positions 383 to 409 are disordered; sequence PFQDTPSSSQATEAAEVDMEKRNDPRI. Residues 384 to 394 show a composition bias toward polar residues; sequence FQDTPSSSQAT. The segment covering 400 to 409 has biased composition (basic and acidic residues); it reads DMEKRNDPRI.

It belongs to the histone deacetylase family. HD type 1 subfamily. The cofactor is Zn(2+). In terms of tissue distribution, low expression in flowers.

It is found in the nucleus. It catalyses the reaction N(6)-acetyl-L-lysyl-[histone] + H2O = L-lysyl-[histone] + acetate. Functionally, responsible for the deacetylation of lysine residues on the N-terminal part of the core histones (H2A, H2B, H3 and H4). Histone deacetylation gives a tag for epigenetic repression and plays an important role in transcriptional regulation, cell cycle progression and developmental events. May be involved in flowering induction. Histone deacetylases act via the formation of large multiprotein complexes. The sequence is that of Histone deacetylase 7 (HDA7) from Arabidopsis thaliana (Mouse-ear cress).